A 446-amino-acid chain; its full sequence is Histidine--tRNA ligase (446 aa).

It belongs to the class-II aminoacyl-tRNA synthetase family. In terms of assembly, homodimer.

The protein localises to the cytoplasm. The enzyme catalyses tRNA(His) + L-histidine + ATP = L-histidyl-tRNA(His) + AMP + diphosphate + H(+). The sequence is that of Histidine--tRNA ligase from Burkholderia cenocepacia (strain HI2424).